A 122-amino-acid polypeptide reads, in one-letter code: Large ribosomal subunit protein uL14 (122 aa).

Belongs to the universal ribosomal protein uL14 family. Part of the 50S ribosomal subunit. Forms a cluster with proteins L3 and L19. In the 70S ribosome, L14 and L19 interact and together make contacts with the 16S rRNA in bridges B5 and B8.

Binds to 23S rRNA. Forms part of two intersubunit bridges in the 70S ribosome. In Desulfotalea psychrophila (strain LSv54 / DSM 12343), this protein is Large ribosomal subunit protein uL14.